Here is a 103-residue protein sequence, read N- to C-terminus: MGSRCAKLNTGQSPGHSPGHSTGHGRGHESSMKKLMACVSQDNFSLSSAGEEEEEEEEEGEEEEKEELPVQGKLLLLEPERQEEGHKDNAEAQQSPEPKRTPS.

Residues 1-103 (MGSRCAKLNT…QSPEPKRTPS (103 aa)) form a disordered region. A compositionally biased stretch (low complexity) spans 10–21 (TGQSPGHSPGHS). Over residues 50 to 66 (GEEEEEEEEEGEEEEKE) the composition is skewed to acidic residues. A compositionally biased stretch (basic and acidic residues) spans 78–90 (EPERQEEGHKDNA). A Phosphoserine modification is found at serine 95.

The protein belongs to the protamine P3 family.

The protein localises to the nucleus. The protein resides in the chromosome. Its function is as follows. Protamines substitute for histones in the chromatin of sperm during the haploid phase of spermatogenesis. They compact sperm DNA into a highly condensed, stable and inactive complex. The protein is Protamine-3 (PRM3) of Homo sapiens (Human).